The following is a 355-amino-acid chain: Galectin-9 (355 aa).

Galectin domains follow at residues Phe17–Gln148 and Phe227–Thr355. A beta-D-galactoside contacts are provided by residues Asn48, His61, Arg65, Asn75, Trp82–Lys88, His267, Arg271, Thr281, and Trp287–Ser293.

Monomer. In terms of tissue distribution, peripheral blood leukocytes and lymphatic tissues. Expressed in lung, liver, breast and kidney with higher levels in tumor endothelial cells than normal endothelium (at protein level). Expressed in trophoblast cells in decidua and placenta in pregnancy (at protein level). Isoform 2 is the most abundant isoform expressed in endothelial cells. Upon endothelial cell activation isoform 2 expression decreases while expression of isoform 3 and isoform 5 increases. Isoform 4 decreases in pathological pregnancy.

It localises to the cytoplasm. The protein resides in the nucleus. It is found in the secreted. In terms of biological role, binds galactosides. Has high affinity for the Forssman pentasaccharide. Ligand for HAVCR2/TIM3. Binding to HAVCR2 induces T-helper type 1 lymphocyte (Th1) death. Also stimulates bactericidal activity in infected macrophages by causing macrophage activation and IL1B secretion which restricts intracellular bacterial growth. Ligand for P4HB; the interaction retains P4HB at the cell surface of Th2 T-helper cells, increasing disulfide reductase activity at the plasma membrane, altering the plasma membrane redox state and enhancing cell migration. Ligand for CD44; the interaction enhances binding of SMAD3 to the FOXP3 promoter, leading to up-regulation of FOXP3 expression and increased induced regulatory T (iTreg) cell stability and suppressive function. Promotes ability of mesenchymal stromal cells to suppress T-cell proliferation. Expands regulatory T-cells and induces cytotoxic T-cell apoptosis following virus infection. Activates ERK1/2 phosphorylation inducing cytokine (IL-6, IL-8, IL-12) and chemokine (CCL2) production in mast and dendritic cells. Inhibits degranulation and induces apoptosis of mast cells. Induces maturation and migration of dendritic cells. Inhibits natural killer (NK) cell function. Can transform NK cell phenotype from peripheral to decidual during pregnancy. Astrocyte derived galectin-9 enhances microglial TNF production. May play a role in thymocyte-epithelial interactions relevant to the biology of the thymus. May provide the molecular basis for urate flux across cell membranes, allowing urate that is formed during purine metabolism to efflux from cells and serving as an electrogenic transporter that plays an important role in renal and gastrointestinal urate excretion. Highly selective to the anion urate. Its function is as follows. Acts as an eosinophil chemoattractant. It also inhibits angiogenesis. Suppresses IFNG production by natural killer cells. This Homo sapiens (Human) protein is Galectin-9 (LGALS9).